A 180-amino-acid polypeptide reads, in one-letter code: Large ribosomal subunit protein uL6 (180 aa).

This sequence belongs to the universal ribosomal protein uL6 family. Part of the 50S ribosomal subunit.

Functionally, this protein binds to the 23S rRNA, and is important in its secondary structure. It is located near the subunit interface in the base of the L7/L12 stalk, and near the tRNA binding site of the peptidyltransferase center. This Borreliella burgdorferi (strain ATCC 35210 / DSM 4680 / CIP 102532 / B31) (Borrelia burgdorferi) protein is Large ribosomal subunit protein uL6.